The following is a 329-amino-acid chain: uncharacterized protein (329 aa).

Positions 1–32 (MSQDRGPRRPRRLEKCALISASATVLSLTASG) are cleaved as a signal peptide. Cysteine 33 carries the N-palmitoyl cysteine lipid modification. Residue cysteine 33 is the site of S-diacylglycerol cysteine attachment.

It localises to the cell membrane. This is an uncharacterized protein from Streptomyces coelicolor (strain ATCC BAA-471 / A3(2) / M145).